We begin with the raw amino-acid sequence, 705 residues long: Polyribonucleotide nucleotidyltransferase (705 aa).

Positions 485 and 491 each coordinate Mg(2+). Positions 552–611 (PRVYTMTIAPEKIRDVIGAGGKTINKIIGETGVQIDIKEDGKIYVMSSDSVGANRALKMI) constitute a KH domain. One can recognise an S1 motif domain in the interval 621–689 (GEIYLGKVTR…DQGRINLSRR (69 aa)).

Belongs to the polyribonucleotide nucleotidyltransferase family. Requires Mg(2+) as cofactor.

It localises to the cytoplasm. It catalyses the reaction RNA(n+1) + phosphate = RNA(n) + a ribonucleoside 5'-diphosphate. In terms of biological role, involved in mRNA degradation. Catalyzes the phosphorolysis of single-stranded polyribonucleotides processively in the 3'- to 5'-direction. This is Polyribonucleotide nucleotidyltransferase from Clostridium tetani (strain Massachusetts / E88).